The chain runs to 514 residues: Beta-secretase 2 (514 aa).

The signal sequence occupies residues 1–20 (MGALLRALLLPLLAQWLLRA). Residues 21–62 (VPVLAPAPFTLPLQVAGAANHRASTVPGLGTPELPRADGLAL) constitute a propeptide that is removed on maturation. The Extracellular portion of the chain corresponds to 21–469 (VPVLAPAPFT…NEPILWIVSY (449 aa)). The Peptidase A1 domain occupies 88 to 425 (YYLEMLIGTP…DRAQRRVGFA (338 aa)). D106 is an active-site residue. An N-linked (GlcNAc...) asparagine glycan is attached at N166. 3 disulfides stabilise this stretch: C229–C429, C288–C453, and C340–C389. The active site involves D299. N-linked (GlcNAc...) asparagine glycosylation is present at N362. A helical membrane pass occupies residues 470–490 (ALMSVCGAILLVLILLLLFPL). Over 491-514 (HCRHAPRDPEVVNDESSLVRHRWK) the chain is Cytoplasmic.

It belongs to the peptidase A1 family. Monomer. Interacts with RTN3 and RTN4. Undergoes autoproteolytic cleavage. In terms of processing, glycosylated.

It localises to the cell membrane. The protein localises to the golgi apparatus. The protein resides in the endoplasmic reticulum. Its subcellular location is the endosome. It is found in the melanosome. It catalyses the reaction Broad endopeptidase specificity. Cleaves Glu-Val-Asn-Leu-|-Asp-Ala-Glu-Phe in the Swedish variant of Alzheimer's amyloid precursor protein.. Its function is as follows. Responsible for the proteolytic processing of the amyloid precursor protein (APP). Cleaves APP, between residues 690 and 691, leading to the generation and extracellular release of beta-cleaved soluble APP, and a corresponding cell-associated C-terminal fragment which is later released by gamma-secretase. It has also been shown that it can cleave APP between residues 671 and 672. Involved in the proteolytic shedding of PMEL at early stages of melanosome biogenesis. Cleaves PMEL within the M-beta fragment to release the amyloidogenic PMEL luminal fragment containing M-alpha and a small portion of M-beta N-terminus. This is a prerequisite step for subsequent processing and assembly of PMEL fibrils into amyloid sheets. Responsible also for the proteolytic processing of CLTRN in pancreatic beta cells. In Rattus norvegicus (Rat), this protein is Beta-secretase 2 (Bace2).